We begin with the raw amino-acid sequence, 301 residues long: GTPase Era (301 aa).

The 168-residue stretch at 6–173 (KSGFVAIVGR…LEQTNANLEI (168 aa)) folds into the Era-type G domain. Positions 14–21 (GRPNVGKS) are G1. Residue 14-21 (GRPNVGKS) coordinates GTP. A G2 region spans residues 40–44 (QTTRN). The segment at 61–64 (DTPG) is G3. GTP-binding positions include 61-65 (DTPGI) and 123-126 (NKID). Residues 123-126 (NKID) are G4. The tract at residues 152–154 (ISA) is G5. Residues 204-282 (TREEVPHSVA…FLEIWVKVQK (79 aa)) form the KH type-2 domain.

This sequence belongs to the TRAFAC class TrmE-Era-EngA-EngB-Septin-like GTPase superfamily. Era GTPase family. As to quaternary structure, monomer.

The protein localises to the cytoplasm. It localises to the cell membrane. An essential GTPase that binds both GDP and GTP, with rapid nucleotide exchange. Plays a role in 16S rRNA processing and 30S ribosomal subunit biogenesis and possibly also in cell cycle regulation and energy metabolism. The protein is GTPase Era of Listeria welshimeri serovar 6b (strain ATCC 35897 / DSM 20650 / CCUG 15529 / CIP 8149 / NCTC 11857 / SLCC 5334 / V8).